Here is a 498-residue protein sequence, read N- to C-terminus: ATP synthase subunit beta, chloroplastic (498 aa).

Residue 172–179 (GGAGVGKT) coordinates ATP.

The protein belongs to the ATPase alpha/beta chains family. In terms of assembly, F-type ATPases have 2 components, CF(1) - the catalytic core - and CF(0) - the membrane proton channel. CF(1) has five subunits: alpha(3), beta(3), gamma(1), delta(1), epsilon(1). CF(0) has four main subunits: a(1), b(1), b'(1) and c(9-12).

Its subcellular location is the plastid. The protein resides in the chloroplast thylakoid membrane. It carries out the reaction ATP + H2O + 4 H(+)(in) = ADP + phosphate + 5 H(+)(out). Produces ATP from ADP in the presence of a proton gradient across the membrane. The catalytic sites are hosted primarily by the beta subunits. In Populus trichocarpa (Western balsam poplar), this protein is ATP synthase subunit beta, chloroplastic.